We begin with the raw amino-acid sequence, 121 residues long: Small ribosomal subunit protein uS13 (121 aa).

The tract at residues 94 to 121 (GLPLRGQRTRTNARTRKGPRRAAQALKK) is disordered.

The protein belongs to the universal ribosomal protein uS13 family. As to quaternary structure, part of the 30S ribosomal subunit. Forms a loose heterodimer with protein S19. Forms two bridges to the 50S subunit in the 70S ribosome.

Its function is as follows. Located at the top of the head of the 30S subunit, it contacts several helices of the 16S rRNA. In the 70S ribosome it contacts the 23S rRNA (bridge B1a) and protein L5 of the 50S subunit (bridge B1b), connecting the 2 subunits; these bridges are implicated in subunit movement. Contacts the tRNAs in the A and P-sites. The sequence is that of Small ribosomal subunit protein uS13 from Burkholderia mallei (strain NCTC 10247).